The primary structure comprises 23 residues: Alyteserin-1a (23 aa).

N23 carries the asparagine amide modification.

In terms of tissue distribution, expressed by the skin glands.

It is found in the secreted. It localises to the target cell membrane. Antibacterial peptide with amphipathic alpha-helical structure. Shows selective growth inhibitory activity against the Gram-negative bacteria E.coli (MIC=25 uM) Has a weak hemolytic activity against human erythrocytes (LC(50)&gt;100 uM). Is very weakly active against S.aureus (MIC=200 uM). In Alytes obstetricans (Common midwife toad), this protein is Alyteserin-1a.